Consider the following 436-residue polypeptide: Coiled-coil domain-containing protein 71 (436 aa).

The disordered stretch occupies residues 95 to 119 (ATSLPARAPQTAKSVPTGQTTLLPV). Residues 105-116 (TAKSVPTGQTTL) are compositionally biased toward polar residues. Residue S129 is modified to Phosphoserine. 2 disordered regions span residues 210 to 258 (LRKG…MKGR) and 314 to 405 (ALRG…KVDR). Positions 264-334 (KTVRGKAPRT…QAKAKAARTK (71 aa)) form a coiled coil. Residues 329–340 (KAARTKHKKRPK) show a composition bias toward basic residues. The segment covering 344–359 (QTRTGRTSLKNSSETV) has biased composition (polar residues). Residues 373–386 (PPKKRARCVPRSKA) are compositionally biased toward basic residues.

This is Coiled-coil domain-containing protein 71 (Ccdc71) from Rattus norvegicus (Rat).